Reading from the N-terminus, the 121-residue chain is Centrocin 2 (121 aa).

Positions 1-20 (MMIKIAVVLCAVMATSMVFA) are cleaved as a signal peptide. A propeptide spanning residues 21–50 (NDVKEQELADLLDLLISEEVSSPDDAVAES) is cleaved from the precursor. 2 positions are modified to 6'-bromotryptophan: W51 and W59. Cysteines 77 and 112 form a disulfide. A propeptide spanning residues 83–106 (SPQEARAKVLEAFPEMKESDLDEE) is cleaved from the precursor. Q107 carries the pyrrolidone carboxylic acid modification. H119 is modified (histidine amide).

As to quaternary structure, heterodimer of a light and a heavy chain, probably disulfide-linked.

Its function is as follows. Has antimicrobial activity against Gram-negative bacteria, Gram-positive bacteria and against fungi with minimum inhibitory concentration (MIC) between 0.78 uM and 50 uM. Shows little hemolytic activity at concentrations up to 12.5 uM but &gt;50% lysis at 100 uM. The protein is Centrocin 2 of Echinus esculentus (Sea urchin).